The sequence spans 501 residues: Glycerol kinase 1 (501 aa).

Position 16 (Thr16) interacts with ADP. Residues Thr16, Thr17, and Ser18 each contribute to the ATP site. Residue Thr16 participates in sn-glycerol 3-phosphate binding. Arg20 lines the ADP pocket. Arg84, Glu85, Tyr135, and Asp242 together coordinate sn-glycerol 3-phosphate. 5 residues coordinate glycerol: Arg84, Glu85, Tyr135, Asp242, and Gln243. ADP-binding residues include Thr264 and Gly307. Thr264, Gly307, Gln311, and Gly408 together coordinate ATP. Gly408 lines the ADP pocket.

The protein belongs to the FGGY kinase family.

It catalyses the reaction glycerol + ATP = sn-glycerol 3-phosphate + ADP + H(+). It participates in polyol metabolism; glycerol degradation via glycerol kinase pathway; sn-glycerol 3-phosphate from glycerol: step 1/1. Its function is as follows. Key enzyme in the regulation of glycerol uptake and metabolism. Catalyzes the phosphorylation of glycerol to yield sn-glycerol 3-phosphate. The protein is Glycerol kinase 1 of Saccharolobus solfataricus (strain ATCC 35092 / DSM 1617 / JCM 11322 / P2) (Sulfolobus solfataricus).